Here is a 2131-residue protein sequence, read N- to C-terminus: Protein Ycf2 (2131 aa).

Residue 1466–1473 (GSIGTGRS) coordinates ATP.

The protein belongs to the Ycf2 family.

The protein resides in the plastid. The protein localises to the chloroplast stroma. Functionally, probable ATPase of unknown function. Its presence in a non-photosynthetic plant (Epifagus virginiana) and experiments in tobacco indicate that it has an essential function which is probably not related to photosynthesis. The sequence is that of Protein Ycf2 from Helianthus annuus (Common sunflower).